The primary structure comprises 69 residues: Conotoxin AbVIE (69 aa).

Positions 1–17 (VLIIAVLFLTACQLTTA) are cleaved as a signal peptide. Residues 18 to 40 (ETSSRGKQKHRALRSTDKYSRMT) constitute a propeptide that is removed on maturation. Intrachain disulfides connect Cys43–Cys57, Cys50–Cys61, and Cys56–Cys66.

The protein belongs to the conotoxin O1 superfamily. In terms of tissue distribution, expressed by the venom duct.

It is found in the secreted. The protein is Conotoxin AbVIE of Conus abbreviatus (Abbreviated cone).